Here is a 183-residue protein sequence, read N- to C-terminus: Hypoxanthine/guanine phosphoribosyltransferase (183 aa).

The protein belongs to the purine/pyrimidine phosphoribosyltransferase family. Archaeal HPRT subfamily. In terms of assembly, homodimer.

The protein localises to the cytoplasm. It carries out the reaction IMP + diphosphate = hypoxanthine + 5-phospho-alpha-D-ribose 1-diphosphate. It catalyses the reaction GMP + diphosphate = guanine + 5-phospho-alpha-D-ribose 1-diphosphate. It participates in purine metabolism; IMP biosynthesis via salvage pathway; IMP from hypoxanthine: step 1/1. In terms of biological role, catalyzes a salvage reaction resulting in the formation of IMP that is energically less costly than de novo synthesis. The protein is Hypoxanthine/guanine phosphoribosyltransferase of Methanotorris igneus (strain DSM 5666 / JCM 11834 / Kol 5).